We begin with the raw amino-acid sequence, 502 residues long: Probable cytosol aminopeptidase (502 aa).

2 residues coordinate Mn(2+): Lys254 and Asp259. Lys266 is a catalytic residue. Mn(2+)-binding residues include Asp277, Asp336, and Glu338. The active site involves Arg340.

Belongs to the peptidase M17 family. Requires Mn(2+) as cofactor.

Its subcellular location is the cytoplasm. It carries out the reaction Release of an N-terminal amino acid, Xaa-|-Yaa-, in which Xaa is preferably Leu, but may be other amino acids including Pro although not Arg or Lys, and Yaa may be Pro. Amino acid amides and methyl esters are also readily hydrolyzed, but rates on arylamides are exceedingly low.. The enzyme catalyses Release of an N-terminal amino acid, preferentially leucine, but not glutamic or aspartic acids.. Functionally, presumably involved in the processing and regular turnover of intracellular proteins. Catalyzes the removal of unsubstituted N-terminal amino acids from various peptides. The chain is Probable cytosol aminopeptidase from Tropheryma whipplei (strain TW08/27) (Whipple's bacillus).